Consider the following 223-residue polypeptide: uncharacterized protein (223 aa).

Residues 40-70 (GSKRLKPAKFGTEGKERVEQRTERQRTGSSK) form a disordered region. The span at 51–70 (TEGKERVEQRTERQRTGSSK) shows a compositional bias: basic and acidic residues.

This is an uncharacterized protein from Homo sapiens (Human).